Reading from the N-terminus, the 505-residue chain is Probable alpha-L-arabinofuranosidase C (505 aa).

3 N-linked (GlcNAc...) asparagine glycosylation sites follow: N152, N269, and N438.

It belongs to the glycosyl hydrolase 51 family.

It localises to the secreted. The enzyme catalyses Hydrolysis of terminal non-reducing alpha-L-arabinofuranoside residues in alpha-L-arabinosides.. It participates in glycan metabolism; L-arabinan degradation. Functionally, alpha-L-arabinofuranosidase involved in the degradation of arabinoxylan, a major component of plant hemicellulose. Acts only on small linear 1,5-alpha-linked L-arabinofuranosyl oligosaccharides. The polypeptide is Probable alpha-L-arabinofuranosidase C (abfC) (Aspergillus clavatus (strain ATCC 1007 / CBS 513.65 / DSM 816 / NCTC 3887 / NRRL 1 / QM 1276 / 107)).